The sequence spans 274 residues: Diaminopimelate epimerase (274 aa).

Substrate contacts are provided by Asn13, Gln45, and Asn63. Residue Cys72 is the Proton donor of the active site. Substrate-binding positions include 73–74 (GN), Asn158, Asn191, and 209–210 (ER). Cys218 serves as the catalytic Proton acceptor. 219–220 (GT) contacts substrate.

Belongs to the diaminopimelate epimerase family. Homodimer.

The protein resides in the cytoplasm. It catalyses the reaction (2S,6S)-2,6-diaminopimelate = meso-2,6-diaminopimelate. The protein operates within amino-acid biosynthesis; L-lysine biosynthesis via DAP pathway; DL-2,6-diaminopimelate from LL-2,6-diaminopimelate: step 1/1. Catalyzes the stereoinversion of LL-2,6-diaminopimelate (L,L-DAP) to meso-diaminopimelate (meso-DAP), a precursor of L-lysine and an essential component of the bacterial peptidoglycan. The protein is Diaminopimelate epimerase of Pelagibacter ubique (strain HTCC1062).